Here is a 1555-residue protein sequence, read N- to C-terminus: Regulating synaptic membrane exocytosis protein 2 (1555 aa).

The segment at M1 to E35 is disordered. Positions R10–E25 are enriched in pro residues. One can recognise a RabBD domain in the interval M26–S154. An FYVE-type zinc finger spans residues K86 to E142. 8 residues coordinate Zn(2+): C92, C95, C108, C111, C116, C119, C134, and C137. The segment covering S154–D163 has biased composition (polar residues). A disordered region spans residues S154–D530. Positions L170 to E185 are enriched in basic and acidic residues. Polar residues predominate over residues Y259–R268. Composition is skewed to basic and acidic residues over residues E287–R298, R317–S335, E351–D370, and E379–A403. At S369 the chain carries Phosphoserine. Positions A418–S432 are enriched in polar residues. Residues D444–D461 show a composition bias toward basic and acidic residues. The span at R479–S490 shows a compositional bias: polar residues. Over residues R497–K506 the composition is skewed to basic residues. Residues D590–R676 form the PDZ domain. T611 is subject to Phosphothreonine. Residues P682 to S716 form a disordered region. Residues S713 and S716 each carry the phosphoserine modification. Residues F743–Y866 form the C2 1 domain. Disordered stretches follow at residues P877–Y913, S935–S1145, Y1180–A1207, L1268–K1288, and K1307–T1332. Polar residues predominate over residues S935–G953. 2 stretches are compositionally biased toward basic and acidic residues: residues R996–H1014 and Q1025–D1071. Residues A1092–G1114 are compositionally biased toward low complexity. S1106 is subject to Phosphoserine. Basic and acidic residues-rich tracts occupy residues T1128–R1141 and Y1180–A1190. Residues S1200 and S1276 each carry the phosphoserine modification. Residues A1401–F1519 enclose the C2 2 domain. Phosphoserine occurs at positions 1540 and 1543.

As to quaternary structure, heterodimer with PCLO. Part of a ternary complex involving PCLO and EPAC2. Interacts with RAB3C, RAB3D and RAB26. Binds RAB3A and RAB3B that have been activated by GTP-binding. Interacts with TSPOAP1 and RIMBP2. Interacts with PPFIA3 and PPFIA4. Interacts via its zinc finger with the first C2 domain of UNC13A. Forms a complex consisting of UNC13A, RIMS2 and RAB3A. As to expression, highly expressed in hippocampus, brain cortex, cerebellum and olfactory bulb. Detected at intermediate levels in midbrain, hindbrain and spinal cord, and at low levels in testis.

The protein resides in the cell membrane. It localises to the synapse. It is found in the presynaptic cell membrane. In terms of biological role, rab effector involved in exocytosis. May act as scaffold protein. Plays a role in dendrite formation by melanocytes. The polypeptide is Regulating synaptic membrane exocytosis protein 2 (Rims2) (Rattus norvegicus (Rat)).